A 363-amino-acid chain; its full sequence is Peptide chain release factor 1 (363 aa).

Position 237 is an N5-methylglutamine (Gln-237). Over residues 284–296 (EDEKRRSAEESTR) the composition is skewed to basic and acidic residues. The segment at 284–306 (EDEKRRSAEESTRRSLVASGDRS) is disordered.

It belongs to the prokaryotic/mitochondrial release factor family. In terms of processing, methylated by PrmC. Methylation increases the termination efficiency of RF1.

It is found in the cytoplasm. Functionally, peptide chain release factor 1 directs the termination of translation in response to the peptide chain termination codons UAG and UAA. This is Peptide chain release factor 1 from Shewanella oneidensis (strain ATCC 700550 / JCM 31522 / CIP 106686 / LMG 19005 / NCIMB 14063 / MR-1).